The following is a 439-amino-acid chain: Adenylosuccinate synthetase (439 aa).

Residues 14–20 (GDEGKGK) and 42–44 (GHT) contribute to the GTP site. The active-site Proton acceptor is the aspartate 15. Mg(2+) is bound by residues aspartate 15 and glycine 42. IMP is bound by residues 15-18 (DEGK), 40-43 (NAGH), threonine 130, arginine 144, glutamine 225, threonine 240, and arginine 304. Catalysis depends on histidine 43, which acts as the Proton donor. 300-306 (TTTGRRR) provides a ligand contact to substrate. GTP contacts are provided by residues arginine 306, 332-334 (KLD), and 414-416 (SLG).

Belongs to the adenylosuccinate synthetase family. In terms of assembly, homodimer. Mg(2+) serves as cofactor.

Its subcellular location is the cytoplasm. The catalysed reaction is IMP + L-aspartate + GTP = N(6)-(1,2-dicarboxyethyl)-AMP + GDP + phosphate + 2 H(+). Its pathway is purine metabolism; AMP biosynthesis via de novo pathway; AMP from IMP: step 1/2. Its function is as follows. Plays an important role in the de novo pathway of purine nucleotide biosynthesis. Catalyzes the first committed step in the biosynthesis of AMP from IMP. In Synechococcus sp. (strain CC9902), this protein is Adenylosuccinate synthetase.